Here is a 389-residue protein sequence, read N- to C-terminus: Heat-inducible transcription repressor HrcA (389 aa).

The protein belongs to the HrcA family.

Negative regulator of class I heat shock genes (grpE-dnaK-dnaJ and groELS operons). Prevents heat-shock induction of these operons. In Synechococcus sp. (strain JA-2-3B'a(2-13)) (Cyanobacteria bacterium Yellowstone B-Prime), this protein is Heat-inducible transcription repressor HrcA.